Reading from the N-terminus, the 276-residue chain is Formamidopyrimidine-DNA glycosylase (276 aa).

Catalysis depends on proline 2, which acts as the Schiff-base intermediate with DNA. The active-site Proton donor is the glutamate 3. The active-site Proton donor; for beta-elimination activity is lysine 58. The DNA site is built by histidine 94, arginine 112, and arginine 157. The FPG-type zinc finger occupies 242 to 276; it reads FVYDRAGEPCRVCGAPIRQIVQGQRSTYYCPNCQR. The Proton donor; for delta-elimination activity role is filled by arginine 266.

This sequence belongs to the FPG family. In terms of assembly, monomer. Zn(2+) is required as a cofactor.

The enzyme catalyses Hydrolysis of DNA containing ring-opened 7-methylguanine residues, releasing 2,6-diamino-4-hydroxy-5-(N-methyl)formamidopyrimidine.. It catalyses the reaction 2'-deoxyribonucleotide-(2'-deoxyribose 5'-phosphate)-2'-deoxyribonucleotide-DNA = a 3'-end 2'-deoxyribonucleotide-(2,3-dehydro-2,3-deoxyribose 5'-phosphate)-DNA + a 5'-end 5'-phospho-2'-deoxyribonucleoside-DNA + H(+). Its function is as follows. Involved in base excision repair of DNA damaged by oxidation or by mutagenic agents. Acts as a DNA glycosylase that recognizes and removes damaged bases. Has a preference for oxidized purines, such as 7,8-dihydro-8-oxoguanine (8-oxoG). Has AP (apurinic/apyrimidinic) lyase activity and introduces nicks in the DNA strand. Cleaves the DNA backbone by beta-delta elimination to generate a single-strand break at the site of the removed base with both 3'- and 5'-phosphates. This Burkholderia thailandensis (strain ATCC 700388 / DSM 13276 / CCUG 48851 / CIP 106301 / E264) protein is Formamidopyrimidine-DNA glycosylase.